The primary structure comprises 518 residues: Cytochrome P450 monooxygenase psoD (518 aa).

Cysteine 442 serves as a coordination point for heme.

The protein belongs to the cytochrome P450 family. Heme serves as cofactor.

Its pathway is secondary metabolite biosynthesis. Functionally, cytochrome P450 monooxygenase; part of the gene cluster that mediates the biosynthesis of pseurotin A, a competitive inhibitor of chitin synthase and an inducer of nerve-cell proliferation. The PKS-NRPS hybrid synthetase psoA is responsible for the biosynthesis of azaspirene, one of the first intermediates having the 1-oxa-7-azaspiro[4,4]-non-2-ene-4,6-dione core of pseurotin, via condensation of one acetyl-CoA, 4 malonyl-CoA, and a L-phenylalanine molecule. The dual-functional monooxygenase/methyltransferase psoF seems to be involved in the addition of the C3 methyl group onto the pseurotin scaffold. Azaspirene is then converted to synerazol through 4 steps including oxidation of C17 by the cytochrome P450 monooxygenase psoD, O-methylation of the hydroxy group of C8 by the methyltransferase psoC, and the trans-to-cis isomerization of the C13 olefin by the glutathione S-transferase psoE. The fourth step of synerazol production is performed by the dual-functional monooxygenase/methyltransferase psoF which seems to catalyze the epoxidation of the intermediate deepoxy-synerazol. Synerazol can be attacked by a water molecule nonenzymatically at two different positions to yield two diol products, pseurotin A and pseurotin D. This is Cytochrome P450 monooxygenase psoD from Aspergillus fumigatus (strain ATCC MYA-4609 / CBS 101355 / FGSC A1100 / Af293) (Neosartorya fumigata).